A 647-amino-acid polypeptide reads, in one-letter code: Glutamyl-tRNA(Gln) amidotransferase subunit B, mitochondrial (647 aa).

Residues 87-106 (QAKALKKSGHKKKKSSDNQT) form a disordered region. A compositionally biased stretch (basic residues) spans 90–100 (ALKKSGHKKKK).

The protein belongs to the GatB/GatE family. GatB subfamily. In terms of assembly, subunit of the heterotrimeric GatCAB amidotransferase (AdT) complex, composed of A, B and C subunits.

The protein localises to the mitochondrion. The catalysed reaction is L-glutamyl-tRNA(Gln) + L-glutamine + ATP + H2O = L-glutaminyl-tRNA(Gln) + L-glutamate + ADP + phosphate + H(+). Allows the formation of correctly charged Gln-tRNA(Gln) through the transamidation of misacylated Glu-tRNA(Gln) in the mitochondria. The reaction takes place in the presence of glutamine and ATP through an activated gamma-phospho-Glu-tRNA(Gln). This chain is Glutamyl-tRNA(Gln) amidotransferase subunit B, mitochondrial, found in Neurospora crassa (strain ATCC 24698 / 74-OR23-1A / CBS 708.71 / DSM 1257 / FGSC 987).